A 405-amino-acid chain; its full sequence is Dematin (405 aa).

3 disordered regions span residues 1–29 (MERL…SPSS), 81–100 (SREC…PEVW), and 108–332 (IISQ…DRGN). Over residues 11–29 (SPGSVSSSRDSSVPGSPSS) the composition is skewed to low complexity. 7 positions are modified to phosphoserine: Ser16, Ser18, Ser26, Ser92, Ser96, Ser110, and Ser113. The segment covering 113–124 (STPRTTGTPRTS) has biased composition (low complexity). Position 114 is a phosphothreonine (Thr114). Phosphoserine occurs at positions 156 and 226. The segment covering 216–228 (EEEEEEEDDDSEE) has biased composition (acidic residues). Residues 224–308 (DDSEEEIKAI…SRLQSTEFSP (85 aa)) form an interaction with RASGRF2 region. Composition is skewed to basic and acidic residues over residues 229 to 242 (EIKA…EELS) and 252 to 261 (ILKEEMEKSL). Phosphoserine is present on residues Ser269, Ser279, Ser289, Ser303, Ser315, Ser333, Ser372, and Ser383. Low complexity predominate over residues 277–292 (HTSLHSGTSKSSSLPS). A compositionally biased stretch (polar residues) spans 294-322 (GRTTLSRLQSTEFSPSGSEAGSPGLQNGE). Positions 337–405 (VLEQKIYPYE…NELKKKASLF (69 aa)) constitute an HP domain. Ser403 bears the Phosphoserine; by PKA mark.

It belongs to the villin/gelsolin family. Monomeric (isoform 2); under reducing conditions. Self-associates. Exists under oxidizing condition as a trimer of two isoforms 2 and isoform 1 linked by disulfide bonds. Found in a complex with DMTN, F-actin and spectrin. Found in a complex with ADD2, DMTN and SLC2A1. Interacts with F-actin, ITPKB and spectrin. Isoform 2 interacts with SLC2A1 (via C-terminus cytoplasmic region). Interacts with RASGRF2. Post-translationally, phosphorylated. Phosphorylation at Ser-403 by PKA causes the C-terminal headpiece domain to associate with the N-terminal core domain, and leads to the inhibition of its actin bundling activity. Expressed in platelets. Isoform 1 and isoform 2 are expressed in mature erythrocytes (at protein level).

Its subcellular location is the cytoplasm. It localises to the cytosol. The protein localises to the perinuclear region. It is found in the cytoskeleton. The protein resides in the cell membrane. Its subcellular location is the membrane. It localises to the endomembrane system. The protein localises to the cell projection. Functionally, membrane-cytoskeleton-associated protein with F-actin-binding activity that induces F-actin bundles formation and stabilization. Its F-actin-bundling activity is reversibly regulated upon its phosphorylation by the cAMP-dependent protein kinase A (PKA). Binds to the erythrocyte membrane glucose transporter-1 SLC2A1/GLUT1, and hence stabilizes and attaches the spectrin-actin network to the erythrocytic plasma membrane. Plays a role in maintaining the functional integrity of PKA-activated erythrocyte shape and the membrane mechanical properties. Also plays a role as a modulator of actin dynamics in fibroblasts; acts as a negative regulator of the RhoA activation pathway. In platelets, functions as a regulator of internal calcium mobilization across the dense tubular system that affects platelet granule secretion pathways and aggregation. Also required for the formation of a diverse set of cell protrusions, such as filopodia and lamellipodia, necessary for platelet cell spreading, motility and migration. Acts as a tumor suppressor and inhibits malignant cell transformation. This chain is Dematin (Dmtn), found in Mus musculus (Mouse).